We begin with the raw amino-acid sequence, 253 residues long: Triosephosphate isomerase (253 aa).

A substrate-binding site is contributed by 9–11; sequence NWK. The active-site Electrophile is His-95. Glu-167 (proton acceptor) is an active-site residue. Substrate is bound by residues Gly-173, Ser-213, and 234–235; that span reads GG. Ser-213 is modified (phosphoserine).

The protein belongs to the triosephosphate isomerase family. As to quaternary structure, homodimer.

Its subcellular location is the cytoplasm. The catalysed reaction is D-glyceraldehyde 3-phosphate = dihydroxyacetone phosphate. It participates in carbohydrate biosynthesis; gluconeogenesis. It functions in the pathway carbohydrate degradation; glycolysis; D-glyceraldehyde 3-phosphate from glycerone phosphate: step 1/1. Its function is as follows. Involved in the gluconeogenesis. Catalyzes stereospecifically the conversion of dihydroxyacetone phosphate (DHAP) to D-glyceraldehyde-3-phosphate (G3P). The polypeptide is Triosephosphate isomerase (Bacillus pumilus (strain SAFR-032)).